Consider the following 463-residue polypeptide: ATP-dependent protease ATPase subunit HslU (463 aa).

ATP is bound by residues V21, 63–68 (GVGKTE), D276, E341, and R413.

Belongs to the ClpX chaperone family. HslU subfamily. As to quaternary structure, a double ring-shaped homohexamer of HslV is capped on each side by a ring-shaped HslU homohexamer. The assembly of the HslU/HslV complex is dependent on binding of ATP.

It localises to the cytoplasm. Its function is as follows. ATPase subunit of a proteasome-like degradation complex; this subunit has chaperone activity. The binding of ATP and its subsequent hydrolysis by HslU are essential for unfolding of protein substrates subsequently hydrolyzed by HslV. HslU recognizes the N-terminal part of its protein substrates and unfolds these before they are guided to HslV for hydrolysis. The sequence is that of ATP-dependent protease ATPase subunit HslU from Thermotoga neapolitana (strain ATCC 49049 / DSM 4359 / NBRC 107923 / NS-E).